The chain runs to 407 residues: NAD(P)H-quinone oxidoreductase subunit 1 (407 aa).

Transmembrane regions (helical) follow at residues 28 to 48, 96 to 116, 127 to 147, 175 to 195, 203 to 223, 267 to 287, 309 to 329, 347 to 367, and 374 to 394; these read WLPLPMIVILLTVTVGVIAAV, WLFTLGPAIVIIPVFFSYLVI, ITIGIFFIIAVASISPIGALM, LALSVLAIVMMSSSLSTVDIV, LFSFFSWNIWRQPIGFVIFLI, LILASLIASVLFLGGWSFIVP, ALVGISVTILKATFFVFLAIL, WKFLLPVSLFNLLLTAALVLL, and TLPLYLPLIIFVGLVFVAMSL.

It belongs to the complex I subunit 1 family. In terms of assembly, NDH-1 is composed of at least 11 different subunits.

The protein resides in the cell inner membrane. The enzyme catalyses a plastoquinone + NADH + (n+1) H(+)(in) = a plastoquinol + NAD(+) + n H(+)(out). The catalysed reaction is a plastoquinone + NADPH + (n+1) H(+)(in) = a plastoquinol + NADP(+) + n H(+)(out). Its function is as follows. NDH-1 shuttles electrons from an unknown electron donor, via FMN and iron-sulfur (Fe-S) centers, to quinones in the respiratory and/or the photosynthetic chain. The immediate electron acceptor for the enzyme in this species is believed to be plastoquinone. Couples the redox reaction to proton translocation, and thus conserves the redox energy in a proton gradient. This chain is NAD(P)H-quinone oxidoreductase subunit 1, found in Gloeobacter violaceus (strain ATCC 29082 / PCC 7421).